The chain runs to 387 residues: Putative gustatory receptor 22d (387 aa).

The Cytoplasmic segment spans residues 1-43 (MFRPRCGLRQKFVYVILKSILYSSWLLGIFPFKYEPKKRRLRR). Residues 44–64 (SMWLILFGVVISSSLLILMVK) form a helical membrane-spanning segment. Topologically, residues 65–82 (QSAEDREHGIMLDVFQRN) are extracellular. Residues 83–103 (ALLYQISSLMGVVGVVSICTV) form a helical membrane-spanning segment. Over 104 to 142 (HLRTLWRSKHLEEIYNGLMLLEAKYFCSNAVECPAFDGY) the chain is Cytoplasmic. Residues 143–163 (VIQKGVVIVVGLLAPWMVHFG) traverse the membrane as a helical segment. At 164-184 (MPDSKLPVLNVLVVSMVKLGT) the chain is on the extracellular side. Residues 185-205 (LLLALHYHLGVVIIYRFVWLI) form a helical membrane-spanning segment. Over 206 to 252 (NRELLSLVCSLRGNHKGSSSRVRFLLKLYNKLVNLYSKLADCYDCQT) the chain is Cytoplasmic. The chain crosses the membrane as a helical span at residues 253 to 273 (VLMMAIFLAANIIVCFYMIVY). At 274 to 281 (RISLSKMS) the chain is on the extracellular side. Residues 282-302 (FFVMLIMFPLAIANNFMDFWL) traverse the membrane as a helical segment. Topologically, residues 303–363 (SMKVCDLLQK…HCGLFHVNRE (61 aa)) are cytoplasmic. The chain crosses the membrane as a helical span at residues 364–384 (MGFKMFVASVLYLLYLVQFDY). Residues 385–387 (MNL) are Extracellular-facing.

It belongs to the insect chemoreceptor superfamily. Gustatory receptor (GR) family. Gr22e subfamily. As to expression, expressed in neurons of the dorsal pharyngeal sense organs of larvae.

It localises to the cell membrane. Functionally, probable gustatory receptor which mediates acceptance or avoidance behavior, depending on its substrates. The sequence is that of Putative gustatory receptor 22d from Drosophila melanogaster (Fruit fly).